Reading from the N-terminus, the 841-residue chain is ATP-dependent helicase Lhr-Core (841 aa).

ATP is bound by residues glutamine 39, lysine 62, threonine 63, aspartate 181, glutamate 182, isoleucine 352, arginine 369, and histidine 372. The region spanning 43–234 is the Helicase ATP-binding domain; sequence IKEIHEGKNV…FLVGNGRDCY (192 aa). The DEVH box motif lies at 181–184; it reads DEIH. The region spanning 266–416 is the Helicase C-terminal domain; that stretch reads RLYNLLKKLI…RIHIPKNCLD (151 aa). Positions 417-500 are WH domain; the sequence is VLAQHLVGMA…IYYMNVGTIP (84 aa). The interval 501–841 is domain 4; that stretch reads DETAVDVIAD…MEFISMKGKK (341 aa).

The protein belongs to the Lhr helicase family. Lhr-Core subfamily. Monomer.

It carries out the reaction Couples ATP hydrolysis with the unwinding of duplex DNA by translocating in the 3'-5' direction.. The catalysed reaction is ATP + H2O = ADP + phosphate + H(+). Its function is as follows. DNA helicase that loads on single-stranded (ss)DNA and translocates in a 3'-5' direction, probably involved in DNA repair. Archaeal orthologs have double-stranded (ds)DNA and/or RNA:DNA helicase activity. The chain is ATP-dependent helicase Lhr-Core from Methanocaldococcus jannaschii (strain ATCC 43067 / DSM 2661 / JAL-1 / JCM 10045 / NBRC 100440) (Methanococcus jannaschii).